Reading from the N-terminus, the 210-residue chain is Proteasome subunit beta (210 aa).

Positions 1–9 are cleaved as a propeptide — removed in mature form; by autocatalysis; sequence MNDKNTLKG. Catalysis depends on Thr-10, which acts as the Nucleophile.

Belongs to the peptidase T1B family. In terms of assembly, the 20S proteasome core is composed of 14 alpha and 14 beta subunits that assemble into four stacked heptameric rings, resulting in a barrel-shaped structure. The two inner rings, each composed of seven catalytic beta subunits, are sandwiched by two outer rings, each composed of seven alpha subunits. The catalytic chamber with the active sites is on the inside of the barrel. Has a gated structure, the ends of the cylinder being occluded by the N-termini of the alpha-subunits. Is capped at one or both ends by the proteasome regulatory ATPase, PAN.

It is found in the cytoplasm. It catalyses the reaction Cleavage of peptide bonds with very broad specificity.. Its activity is regulated as follows. The formation of the proteasomal ATPase PAN-20S proteasome complex, via the docking of the C-termini of PAN into the intersubunit pockets in the alpha-rings, triggers opening of the gate for substrate entry. Interconversion between the open-gate and close-gate conformations leads to a dynamic regulation of the 20S proteasome proteolysis activity. Functionally, component of the proteasome core, a large protease complex with broad specificity involved in protein degradation. This Methanothermobacter thermautotrophicus (strain ATCC 29096 / DSM 1053 / JCM 10044 / NBRC 100330 / Delta H) (Methanobacterium thermoautotrophicum) protein is Proteasome subunit beta.